Here is a 655-residue protein sequence, read N- to C-terminus: Putative sensor protein Sfri_3689 (655 aa).

An N-terminal signal peptide occupies residues 1–17 (MKTLLLLLIIITMPVLA). The helical transmembrane segment at 252–272 (FALAILVAIMSAIGMIFTGFI) threads the bilayer. The region spanning 419 to 653 (GIAHEINNPT…QIRLIFALAQ (235 aa)) is the Histidine kinase domain. His-422 is modified (phosphohistidine; by autocatalysis).

It localises to the cell membrane. The enzyme catalyses ATP + protein L-histidine = ADP + protein N-phospho-L-histidine.. This is Putative sensor protein Sfri_3689 from Shewanella frigidimarina (strain NCIMB 400).